A 530-amino-acid chain; its full sequence is Protein P80 (530 aa).

Residues 1–22 (MKVISGLLFFILISCSLFLVQG) form the signal peptide. A helical transmembrane segment spans residues 491–511 (MLVAMTFNVALFFAVIAGVLV).

This sequence belongs to the SLC31A transporter family.

The protein localises to the late endosome membrane. This chain is Protein P80 (p80), found in Dictyostelium discoideum (Social amoeba).